The following is a 268-amino-acid chain: Tryptophan synthase alpha chain (268 aa).

Catalysis depends on proton acceptor residues Glu-49 and Asp-60.

It belongs to the TrpA family. In terms of assembly, tetramer of two alpha and two beta chains.

The enzyme catalyses (1S,2R)-1-C-(indol-3-yl)glycerol 3-phosphate + L-serine = D-glyceraldehyde 3-phosphate + L-tryptophan + H2O. It participates in amino-acid biosynthesis; L-tryptophan biosynthesis; L-tryptophan from chorismate: step 5/5. Its function is as follows. The alpha subunit is responsible for the aldol cleavage of indoleglycerol phosphate to indole and glyceraldehyde 3-phosphate. This Serratia proteamaculans (strain 568) protein is Tryptophan synthase alpha chain.